Here is a 104-residue protein sequence, read N- to C-terminus: Large ribosomal subunit protein uL24 (104 aa).

The protein belongs to the universal ribosomal protein uL24 family. As to quaternary structure, part of the 50S ribosomal subunit.

Functionally, one of two assembly initiator proteins, it binds directly to the 5'-end of the 23S rRNA, where it nucleates assembly of the 50S subunit. Its function is as follows. One of the proteins that surrounds the polypeptide exit tunnel on the outside of the subunit. The chain is Large ribosomal subunit protein uL24 from Shewanella amazonensis (strain ATCC BAA-1098 / SB2B).